A 286-amino-acid polypeptide reads, in one-letter code: Polyamine aminopropyltransferase (286 aa).

One can recognise a PABS domain in the interval 3–240; sequence DLWYSESHAD…GHWLFGFASK (238 aa). Residue glutamine 32 participates in S-methyl-5'-thioadenosine binding. Positions 63 and 87 each coordinate spermidine. Residues glutamate 107 and 139–140 contribute to the S-methyl-5'-thioadenosine site; that span reads DG. Aspartate 158 (proton acceptor) is an active-site residue. 158-161 serves as a coordination point for spermidine; the sequence is DSTD. Proline 165 is an S-methyl-5'-thioadenosine binding site.

This sequence belongs to the spermidine/spermine synthase family. In terms of assembly, homodimer or homotetramer.

The protein localises to the cytoplasm. It carries out the reaction S-adenosyl 3-(methylsulfanyl)propylamine + putrescine = S-methyl-5'-thioadenosine + spermidine + H(+). Its pathway is amine and polyamine biosynthesis; spermidine biosynthesis; spermidine from putrescine: step 1/1. Its function is as follows. Catalyzes the irreversible transfer of a propylamine group from the amino donor S-adenosylmethioninamine (decarboxy-AdoMet) to putrescine (1,4-diaminobutane) to yield spermidine. This Clostridium acetobutylicum (strain ATCC 824 / DSM 792 / JCM 1419 / IAM 19013 / LMG 5710 / NBRC 13948 / NRRL B-527 / VKM B-1787 / 2291 / W) protein is Polyamine aminopropyltransferase.